Here is a 408-residue protein sequence, read N- to C-terminus: Dual-specificity RNA methyltransferase RlmN (408 aa).

The active-site Proton acceptor is Glu122. Positions Glu128–Arg369 constitute a Radical SAM core domain. Cysteines 135 and 380 form a disulfide. Cys142, Cys146, and Cys149 together coordinate [4Fe-4S] cluster. S-adenosyl-L-methionine is bound by residues Gly206 to Glu207, Ser238, Ser260 to His262, and Asn337. Residue Cys380 is the S-methylcysteine intermediate of the active site.

Belongs to the radical SAM superfamily. RlmN family. [4Fe-4S] cluster is required as a cofactor.

It localises to the cytoplasm. It catalyses the reaction adenosine(2503) in 23S rRNA + 2 reduced [2Fe-2S]-[ferredoxin] + 2 S-adenosyl-L-methionine = 2-methyladenosine(2503) in 23S rRNA + 5'-deoxyadenosine + L-methionine + 2 oxidized [2Fe-2S]-[ferredoxin] + S-adenosyl-L-homocysteine. The enzyme catalyses adenosine(37) in tRNA + 2 reduced [2Fe-2S]-[ferredoxin] + 2 S-adenosyl-L-methionine = 2-methyladenosine(37) in tRNA + 5'-deoxyadenosine + L-methionine + 2 oxidized [2Fe-2S]-[ferredoxin] + S-adenosyl-L-homocysteine. Functionally, specifically methylates position 2 of adenine 2503 in 23S rRNA and position 2 of adenine 37 in tRNAs. m2A2503 modification seems to play a crucial role in the proofreading step occurring at the peptidyl transferase center and thus would serve to optimize ribosomal fidelity. This Chelativorans sp. (strain BNC1) protein is Dual-specificity RNA methyltransferase RlmN.